The primary structure comprises 304 residues: Glutaminase (304 aa).

Residues Ser-63, Asn-113, Glu-157, Asn-164, Tyr-188, Tyr-240, and Val-258 each contribute to the substrate site.

This sequence belongs to the glutaminase family. As to quaternary structure, homotetramer.

The enzyme catalyses L-glutamine + H2O = L-glutamate + NH4(+). The chain is Glutaminase from Chromobacterium violaceum (strain ATCC 12472 / DSM 30191 / JCM 1249 / CCUG 213 / NBRC 12614 / NCIMB 9131 / NCTC 9757 / MK).